The chain runs to 460 residues: UDP-glucuronate 4-epimerase 6 (460 aa).

2 helical membrane passes run 41 to 61 and 111 to 131; these read ATLLVALVLVLIFAINYPPLS and GLSVLVTGAAGFVGSHCSLAL. Residue 113–144 participates in NAD(+) binding; it reads SVLVTGAAGFVGSHCSLALRKRGDGVLGFDNF. Tyrosine 263 functions as the Proton acceptor in the catalytic mechanism.

Belongs to the NAD(P)-dependent epimerase/dehydratase family. In terms of assembly, homodimer. In roots, leaf veins, siliques, flowers, pollen and stems.

The protein resides in the golgi apparatus. It localises to the golgi stack membrane. The enzyme catalyses UDP-alpha-D-glucuronate = UDP-alpha-D-galacturonate. Functionally, involved in the synthesis of the negatively charged monosaccharide that forms the backbone of pectic cell wall components. This chain is UDP-glucuronate 4-epimerase 6 (GAE6), found in Arabidopsis thaliana (Mouse-ear cress).